The sequence spans 641 residues: Fructose-1,6-bisphosphatase class 3 (641 aa).

Belongs to the FBPase class 3 family. Mn(2+) serves as cofactor.

It catalyses the reaction beta-D-fructose 1,6-bisphosphate + H2O = beta-D-fructose 6-phosphate + phosphate. It participates in carbohydrate biosynthesis; gluconeogenesis. This is Fructose-1,6-bisphosphatase class 3 from Latilactobacillus sakei subsp. sakei (strain 23K) (Lactobacillus sakei subsp. sakei).